Consider the following 213-residue polypeptide: Outer-membrane lipoprotein carrier protein (213 aa).

The N-terminal stretch at 1–18 is a signal peptide; that stretch reads MKYFATICIAAYAGLAGA.

Belongs to the LolA family. Monomer.

The protein resides in the periplasm. Functionally, participates in the translocation of lipoproteins from the inner membrane to the outer membrane. Only forms a complex with a lipoprotein if the residue after the N-terminal Cys is not an aspartate (The Asp acts as a targeting signal to indicate that the lipoprotein should stay in the inner membrane). The protein is Outer-membrane lipoprotein carrier protein of Albidiferax ferrireducens (strain ATCC BAA-621 / DSM 15236 / T118) (Rhodoferax ferrireducens).